A 324-amino-acid polypeptide reads, in one-letter code: uncharacterized protein (324 aa).

This is an uncharacterized protein from Dryophytes versicolor (chameleon treefrog).